We begin with the raw amino-acid sequence, 1001 residues long: X-linked retinitis pigmentosa GTPase regulator (1001 aa).

6 RCC1 repeats span residues 54–105 (NKLY…STDT), 106–158 (GGVY…LTED), 159–208 (GKLF…VTMD), 209–261 (GELY…LTEK), 262–313 (VVYA…MTEL), and 314–367 (GLLY…FATP). Residues 404–428 (SLSARLRRRERERPPCSASMVGTLP) form a disordered region. Residue Ser-518 is modified to Phosphoserine. Basic and acidic residues-rich tracts occupy residues 631 to 641 (KKIRESEENSK) and 659 to 671 (EDNK…RRSS). Disordered stretches follow at residues 631–738 (KKIR…WYDR), 794–869 (NLEF…EGSE), 902–925 (PKGH…DPTS), and 962–1001 (GDQI…CTIL). Composition is skewed to acidic residues over residues 679-691 (SETE…DSYM) and 717-731 (EKDE…EVET). Composition is skewed to basic and acidic residues over residues 794-818 (NLEF…EKEA), 847-857 (EERKEGEKEIV), and 902-911 (PKGHMYDRVK). Residues 976-1001 (QNHMGQNLQDSTTPNMEGKSKSCTIL) show a composition bias toward polar residues. At Cys-998 the chain carries Cysteine methyl ester. Cys-998 is lipidated: S-geranylgeranyl cysteine. A propeptide spans 999–1001 (TIL) (removed in mature form).

Interacts with SPATA7. Interacts with PDE6D. Interacts with RPGRIP1 and RPGRIP1L; PDE6D, RPGRIP1 and RPGRIP1L may compete for the same binding sites. Interacts with NPM1. Interacts with PDE6D. Isoform 5 interacts (via N-terminus) with SMC1A and SMC3. Isoform 5 interacts with CEP290. Interacts with WHRN. Interacts with RAB37 and RAB8A (in GDP-bound forms); functions as GEF for RAB37 and RAB8A. Prenylated. Expressed in the retina (at protein level). Located mainly in the connecting cilia between the outer segment and inner segment and also observed in the outer plexiform layer, inner plexiform layer, and ganglion cell layer of the retinas. Isoform 1: Expressed in the retina (at protein level). Isoform 5: Expressed in the retina (at protein level). Expressed in the brain. Expressed in the testis (at protein level). Expressed in kidney (at protein level).

It localises to the golgi apparatus. The protein resides in the cytoplasm. It is found in the cytoskeleton. The protein localises to the microtubule organizing center. Its subcellular location is the centrosome. It localises to the cell projection. The protein resides in the cilium. It is found in the cilium basal body. The protein localises to the cilium axoneme. Its subcellular location is the flagellum axoneme. In terms of biological role, acts as a guanine-nucleotide releasing factor (GEF) for RAB8A and RAB37 by promoting the conversion of inactive RAB-GDP to the active form RAB-GTP. GEF activity towards RAB8A may facilitate ciliary trafficking by modulating ciliary intracellular localization of RAB8A. GEF activity towards RAB37 maintains autophagic homeostasis and retinal function. Involved in photoreceptor integrity. May control cilia formation by regulating actin stress filaments and cell contractility. May be involved in microtubule organization and regulation of transport in primary cilia. Functionally, isoform 5 may play a critical role in spermatogenesis and in intraflagellar transport processes. This is X-linked retinitis pigmentosa GTPase regulator from Mus musculus (Mouse).